The primary structure comprises 216 residues: Probable GTP-binding protein EngB (216 aa).

The EngB-type G domain occupies 37-214; sequence GSVEIAFAGR…RAAMIRLLDE (178 aa). GTP is bound by residues 45-52, 72-76, 92-95, 159-162, and 193-195; these read GRSNVGKS, GRTQE, DMPG, TKAD, and TSS. Residues serine 52 and threonine 74 each contribute to the Mg(2+) site.

It belongs to the TRAFAC class TrmE-Era-EngA-EngB-Septin-like GTPase superfamily. EngB GTPase family. The cofactor is Mg(2+).

Its function is as follows. Necessary for normal cell division and for the maintenance of normal septation. The polypeptide is Probable GTP-binding protein EngB (Rhodopseudomonas palustris (strain ATCC BAA-98 / CGA009)).